The sequence spans 338 residues: DNA-directed RNA polymerase subunit alpha (338 aa).

The segment at 1-234 (MIQKNWQELI…DQLEIFVNFE (234 aa)) is alpha N-terminal domain (alpha-NTD). The alpha C-terminal domain (alpha-CTD) stretch occupies residues 250 to 338 (FSPALLKKVD…ELAKRFEEHY (89 aa)).

Belongs to the RNA polymerase alpha chain family. In terms of assembly, homodimer. The RNAP catalytic core consists of 2 alpha, 1 beta, 1 beta' and 1 omega subunit. When a sigma factor is associated with the core the holoenzyme is formed, which can initiate transcription.

The catalysed reaction is RNA(n) + a ribonucleoside 5'-triphosphate = RNA(n+1) + diphosphate. In terms of biological role, DNA-dependent RNA polymerase catalyzes the transcription of DNA into RNA using the four ribonucleoside triphosphates as substrates. The polypeptide is DNA-directed RNA polymerase subunit alpha (Xanthobacter autotrophicus (strain ATCC BAA-1158 / Py2)).